We begin with the raw amino-acid sequence, 32 residues long: Coenzyme PQQ synthesis protein A (32 aa).

Positions 16–20 (EINMY) form a cross-link, pyrroloquinoline quinone (Glu-Tyr).

It belongs to the PqqA family.

It functions in the pathway cofactor biosynthesis; pyrroloquinoline quinone biosynthesis. Functionally, required for coenzyme pyrroloquinoline quinone (PQQ) biosynthesis. PQQ is probably formed by cross-linking a specific glutamate to a specific tyrosine residue and excising these residues from the peptide. In Dinoroseobacter shibae (strain DSM 16493 / NCIMB 14021 / DFL 12), this protein is Coenzyme PQQ synthesis protein A.